The following is a 336-amino-acid chain: Antigen-presenting glycoprotein CD1d1 (336 aa).

The first 21 residues, 1–21, serve as a signal peptide directing secretion; that stretch reads MRYLPWLLLWAFLQVWGQSEA. Over 22 to 305 the chain is Extracellular; it reads QQKNYTFRCL…YWDARQAPVG (284 aa). Asn-25, Asn-38, and Asn-60 each carry an N-linked (GlcNAc...) asparagine glycan. Asp-98 is an a D-galactosylceramide binding site. 2 cysteine pairs are disulfide-bonded: Cys-122/Cys-186 and Cys-226/Cys-281. Residue Asn-128 is glycosylated (N-linked (GlcNAc...) asparagine). Position 171–174 (171–174) interacts with a D-galactosylceramide; that stretch reads DQGT. N-linked (GlcNAc...) asparagine glycosylation occurs at Asn-183. Residues 207–297 form the Ig-like domain; that stretch reads PVAWLSSVPS…LGGQDIILYW (91 aa). A helical transmembrane segment spans residues 306–326; the sequence is LIVFIVLIMLVVVGAVVYYIW. Over 327 to 336 the chain is Cytoplasmic; the sequence is RRRSAYQDIR. Positions 332–335 match the Internalization signal motif; sequence YQDI.

In terms of assembly, heterodimer with B2M (beta-2-microglobulin). Interacts with MHC II and CD74. In terms of processing, N-glycosylated. In terms of tissue distribution, expressed on cortical thymocytes, on certain T-cell leukemias, and in various other tissues.

It localises to the cell membrane. It is found in the endosome membrane. Its subcellular location is the lysosome membrane. Its function is as follows. Antigen-presenting protein that binds self and non-self glycolipids and presents them to T-cell receptors on natural killer T-cells. This is Antigen-presenting glycoprotein CD1d1 (Cd1d1) from Mus musculus (Mouse).